The primary structure comprises 182 residues: Adenine phosphoribosyltransferase (182 aa).

The protein belongs to the purine/pyrimidine phosphoribosyltransferase family. As to quaternary structure, homodimer.

It is found in the cytoplasm. The enzyme catalyses AMP + diphosphate = 5-phospho-alpha-D-ribose 1-diphosphate + adenine. It participates in purine metabolism; AMP biosynthesis via salvage pathway; AMP from adenine: step 1/1. Its function is as follows. Catalyzes a salvage reaction resulting in the formation of AMP, that is energically less costly than de novo synthesis. The polypeptide is Adenine phosphoribosyltransferase (Sulfurimonas denitrificans (strain ATCC 33889 / DSM 1251) (Thiomicrospira denitrificans (strain ATCC 33889 / DSM 1251))).